The primary structure comprises 380 residues: MHSVRTSTTSTSSMVSSTMHPFDAFNAPQPYQQHHPPRWNIHNPHFSQTNGHSIQKTPSMIKLHSSEGTVPTTNGADTLHQRNMEEKIISAPLHYITGLPGKDIRGKLISAFNEWFRIPDEQLEIIKRVVGLLHVASLLIDDIEDSSKLRRGFPVAHSIFGIPQTINSANYAYFQAQSEVLKLRNCNAAFTIFTEELLRLHRGQGMDLYWRDSLTCPTEEEYLDMVANKTGGLFRLAIKLIQLESDVEDDCVPLVDLLGIIFQIRDDYQNLQNEQYAKNKGFAEDITEGKFSYPIVHSIRSGAANCSSGSSELMNILRQKTDDEAVKRYTICILEKTGSFEYTRRKLTELMAAARAMLAEFGSAEAAGLGGILDFLELKE.

Residues 1-19 (MHSVRTSTTSTSSMVSSTM) are compositionally biased toward low complexity. The tract at residues 1-55 (MHSVRTSTTSTSSMVSSTMHPFDAFNAPQPYQQHHPPRWNIHNPHFSQTNGHSIQ) is disordered. Polar residues predominate over residues 45-55 (HFSQTNGHSIQ). Lys102, Arg105, and His134 together coordinate isopentenyl diphosphate. The Mg(2+) site is built by Asp141 and Asp145. Dimethylallyl diphosphate is bound at residue Arg150. Residue Arg151 coordinates isopentenyl diphosphate. Dimethylallyl diphosphate is bound by residues Lys229, Thr230, and Gln263. Asp266 is a binding site for Mg(2+). Dimethylallyl diphosphate is bound by residues Asn270, Lys280, and Lys290.

It belongs to the FPP/GGPP synthase family. Mg(2+) is required as a cofactor.

The enzyme catalyses isopentenyl diphosphate + dimethylallyl diphosphate = (2E)-geranyl diphosphate + diphosphate. It catalyses the reaction isopentenyl diphosphate + (2E)-geranyl diphosphate = (2E,6E)-farnesyl diphosphate + diphosphate. The catalysed reaction is isopentenyl diphosphate + (2E,6E)-farnesyl diphosphate = (2E,6E,10E)-geranylgeranyl diphosphate + diphosphate. The protein operates within secondary metabolite biosynthesis; terpenoid biosynthesis. Geranylgeranyl pyrophosphate synthase; part of the cluster A that mediates the biosynthesis of chevalone E and its oxidized derivatives that possess a unique five-membered lactone ring and can synergistically enhance the cytotoxicity of doxorubicin (DOX) in breast cancer cells. Within the pathway, cle6 takes part to the biosynthesis of the molecular scaffold by providing geranylgeranyl pyrophosphate (GGPP) to the prenyltransferase cle5 for C-3 geranylgeranylation of triacetic acid lactone. The molecular scaffold is commonly biosynthesized by a series of enzymes including the non-reducing polyketide synthase (NR-PKS) cle1 that produces the alpha-pyrone triacetic acid lactone (TAL); The membrane-bound prenyltransferase cle5 that accepts TAL as its substrate to perform a C-3 geranylgeranylation reaction, in which the pathway-dedicated GGPS cle6 is required to provide GGPP, the other substrate of cle5; the FAD-dependent monooxygenase Cle3 that forms an (S)-epoxide ring at the terminal olefin of the geranylgeranyl group; and the terpene cyclase Cle7 that catalyzes the cyclization of the prenyl group that yields the pentacyclic pathway intermediate chevalone E. Chevalone E can derivatize into seven new oxidized analogs by the cytochrome P450 monooxygenases cle2 (acting at C-20) and cle4 (acting at C-11 and C-12). The chain is Geranylgeranyl pyrophosphate synthase cle6 from Aspergillus versicolor.